We begin with the raw amino-acid sequence, 340 residues long: Protein LSM14 homolog car-1 (340 aa).

The Sm domain maps to 1–81; it reads MSNQTPYIGS…IKDLIVCDTP (81 aa). Residues 101-125 show a composition bias toward low complexity; sequence SRSAPASDGAPAASAGSSRAGTPSR. Residues 101–148 form a disordered region; that stretch reads SRSAPASDGAPAASAGSSRAGTPSRNSPLGQIIQNQRPGRGGYQQNFQ. The segment covering 126 to 148 has biased composition (polar residues); it reads NSPLGQIIQNQRPGRGGYQQNFQ. In terms of domain architecture, DFDF spans 178–214; the sequence is VNHREKLKFESDFDFEKANEKFQEVLVDNLEKLNIED. The short motif at 227-243 is the FFD box element; the sequence is AFYDKKTSFFDNISCES. Residues 251–271 carry the TFG box motif; sequence TGRPDWKKERETNQETFGHNA. Residues 277–340 are disordered; sequence YRRGFGGRGR…QGNTAAAAEQ (64 aa). The segment covering 280-296 has biased composition (gly residues); the sequence is GFGGRGRGGNRGYGGYN. Low complexity predominate over residues 312–325; it reads GYRQNNGGYRRGGY.

This sequence belongs to the LSM14 family.

It is found in the nucleus. In terms of biological role, transcriptional regulator. Involved in modulating embryonic expression of ATP-dependent chaperone cdc-48.1. May play a role in mRNA gene silencing, and RNA granule (P-body) assembly. The chain is Protein LSM14 homolog car-1 from Caenorhabditis elegans.